The sequence spans 118 residues: NADPH-dependent 7-cyano-7-deazaguanine reductase (118 aa).

Catalysis depends on Cys31, which acts as the Thioimide intermediate. The active-site Proton donor is Asp38. Residues 53–55 (IEL) and 72–73 (YE) each bind substrate.

Belongs to the GTP cyclohydrolase I family. QueF type 1 subfamily.

The protein resides in the cytoplasm. It carries out the reaction 7-aminomethyl-7-carbaguanine + 2 NADP(+) = 7-cyano-7-deazaguanine + 2 NADPH + 3 H(+). It participates in tRNA modification; tRNA-queuosine biosynthesis. Catalyzes the NADPH-dependent reduction of 7-cyano-7-deazaguanine (preQ0) to 7-aminomethyl-7-deazaguanine (preQ1). This Prosthecochloris aestuarii (strain DSM 271 / SK 413) protein is NADPH-dependent 7-cyano-7-deazaguanine reductase.